The sequence spans 2051 residues: Autophagy-related protein 2 (2051 aa).

Residues 31–121 form the Chorein N-terminal domain; that stretch reads QALDLDNLNF…QDEQTAKNKK (91 aa). Residues 108–117 show a composition bias toward basic and acidic residues; that stretch reads SKQEQDEQTA. Disordered stretches follow at residues 108–129, 152–179, 297–331, 363–384, 419–466, and 501–564; these read SKQEQDEQTAKNKKGTHKDGDE, RRLEKALAEEAQEALSESMSDSETDDDG, SLVKPQGPAPHDVPSTLRDMSGSMQSSVGGLDMSI, DTQYPEAEENVAGSSPLSTPRA, RSEP…ADTE, and PGGW…DTST. Composition is skewed to polar residues over residues 374–383 and 426–435; these read AGSSPLSTPR and PPTSFQPQTM. Low complexity predominate over residues 436 to 454; sequence PSGAVSPAPSEPSSSASSV.

This sequence belongs to the ATG2 family.

The protein localises to the preautophagosomal structure membrane. The protein resides in the endoplasmic reticulum membrane. It carries out the reaction a 1,2-diacyl-sn-glycero-3-phosphocholine(in) = a 1,2-diacyl-sn-glycero-3-phosphocholine(out). The enzyme catalyses a 1,2-diacyl-sn-glycero-3-phospho-L-serine(in) = a 1,2-diacyl-sn-glycero-3-phospho-L-serine(out). It catalyses the reaction a 1,2-diacyl-sn-glycero-3-phosphoethanolamine(in) = a 1,2-diacyl-sn-glycero-3-phosphoethanolamine(out). Functionally, lipid transfer protein required for autophagosome completion and peroxisome degradation. Tethers the edge of the isolation membrane (IM) to the endoplasmic reticulum (ER) and mediates direct lipid transfer from ER to IM for IM expansion. Atg-2 binds to the ER exit site (ERES), which is the membrane source for autophagosome formation, using basic residues in its N-terminal region (NR) and to the expanding edge of the IM through its C-terminal region. The latter binding is assisted by an atg-18-PtdIns3P interaction. Atg-2 then extracts phospholipids from the membrane source using its NR and transfers them to atg-9 to the IM through its predicted beta-sheet-rich structure for membrane expansion. The sequence is that of Autophagy-related protein 2 (apg-2) from Neurospora crassa (strain ATCC 24698 / 74-OR23-1A / CBS 708.71 / DSM 1257 / FGSC 987).